Here is a 311-residue protein sequence, read N- to C-terminus: Cytosolic Fe-S cluster assembly factor Nubp1 homolog (311 aa).

4 residues coordinate [4Fe-4S] cluster: cysteine 9, cysteine 23, cysteine 26, and cysteine 32. An ATP-binding site is contributed by 63–70; sequence GKGGVGKS. [4Fe-4S] cluster is bound by residues cysteine 240 and cysteine 243.

It belongs to the Mrp/NBP35 ATP-binding proteins family. NUBP1/NBP35 subfamily. In terms of assembly, heterotetramer of 2 Nubp1 and 2 Nubp2 chains. It depends on [4Fe-4S] cluster as a cofactor.

The protein localises to the cytoplasm. In terms of biological role, component of the cytosolic iron-sulfur (Fe/S) protein assembly (CIA) machinery. Required for maturation of extramitochondrial Fe-S proteins. The Nubp1-Nubp2 heterotetramer forms a Fe-S scaffold complex, mediating the de novo assembly of an Fe-S cluster and its transfer to target apoproteins. This Drosophila pseudoobscura pseudoobscura (Fruit fly) protein is Cytosolic Fe-S cluster assembly factor Nubp1 homolog.